The chain runs to 158 residues: NAD(P)H-quinone oxidoreductase subunit J, chloroplastic (158 aa).

Belongs to the complex I 30 kDa subunit family. NDH is composed of at least 16 different subunits, 5 of which are encoded in the nucleus.

The protein resides in the plastid. The protein localises to the chloroplast thylakoid membrane. The catalysed reaction is a plastoquinone + NADH + (n+1) H(+)(in) = a plastoquinol + NAD(+) + n H(+)(out). It carries out the reaction a plastoquinone + NADPH + (n+1) H(+)(in) = a plastoquinol + NADP(+) + n H(+)(out). Its function is as follows. NDH shuttles electrons from NAD(P)H:plastoquinone, via FMN and iron-sulfur (Fe-S) centers, to quinones in the photosynthetic chain and possibly in a chloroplast respiratory chain. The immediate electron acceptor for the enzyme in this species is believed to be plastoquinone. Couples the redox reaction to proton translocation, and thus conserves the redox energy in a proton gradient. The sequence is that of NAD(P)H-quinone oxidoreductase subunit J, chloroplastic from Liriodendron tulipifera (Tuliptree).